A 297-amino-acid chain; its full sequence is Nucleotide-binding protein BURPS668_0577 (297 aa).

8–15 provides a ligand contact to ATP; sequence GISGSGKS. 57-60 provides a ligand contact to GTP; sequence DARS.

Belongs to the RapZ-like family.

Displays ATPase and GTPase activities. This chain is Nucleotide-binding protein BURPS668_0577, found in Burkholderia pseudomallei (strain 668).